Here is a 494-residue protein sequence, read N- to C-terminus: Trigger factor (494 aa).

The region spanning 169–254 (GDRITMDYVG…VKEVAAPADV (86 aa)) is the PPIase FKBP-type domain. The tract at residues 441–494 (LAEEEGEAKAETKKAAPKKKAAAKAEAADAGEGEEAAPKKKAAPKKKAADESAE) is disordered.

It belongs to the FKBP-type PPIase family. Tig subfamily.

The protein localises to the cytoplasm. It catalyses the reaction [protein]-peptidylproline (omega=180) = [protein]-peptidylproline (omega=0). Functionally, involved in protein export. Acts as a chaperone by maintaining the newly synthesized protein in an open conformation. Functions as a peptidyl-prolyl cis-trans isomerase. This chain is Trigger factor, found in Rhizobium johnstonii (strain DSM 114642 / LMG 32736 / 3841) (Rhizobium leguminosarum bv. viciae).